Reading from the N-terminus, the 792-residue chain is Receptor-like protein 54 (792 aa).

The first 21 residues, 1–21, serve as a signal peptide directing secretion; it reads MKSNLAVFFITCFFCCVFVTS. Residues 22 to 758 lie on the Extracellular side of the membrane; sequence DSVYTLPFPF…PKQEHALNWK (737 aa). Asparagine 68 and asparagine 107 each carry an N-linked (GlcNAc...) asparagine glycan. 12 LRR repeats span residues 114–137, 139–162, 163–187, 189–209, 211–233, 235–258, 259–282, 283–302, 303–324, 325–349, 351–374, and 375–399; these read QHLR…GFGR, TYLE…ISNL, SRLT…SLTL, ENID…LFTM, FLVS…NYSA, SKLL…ISKL, ANLI…FLLF, KSLV…GTGS, ENLT…FIKD, LQRL…LWTL, SMLH…IILN, and SSIS…PYVN. The N-linked (GlcNAc...) asparagine glycan is linked to asparagine 161. N-linked (GlcNAc...) asparagine glycosylation occurs at asparagine 230. N-linked (GlcNAc...) asparagine glycans are attached at residues asparagine 304 and asparagine 314. N-linked (GlcNAc...) asparagine glycosylation is found at asparagine 356 and asparagine 374. The LRR 13; degenerate repeat unit spans residues 400-418; it reads IMAASNNYFTGGIPLIFCK. 4 LRR repeats span residues 419-443, 444-470, 472-489, and 490-515; these read RYRL…LTNV, SLGL…RLVL, DVGH…LVNC, and TTLK…ALTR. Residues asparagine 431, asparagine 442, asparagine 454, asparagine 488, and asparagine 503 are each glycosylated (N-linked (GlcNAc...) asparagine). The LRR 18; degenerate repeat unit spans residues 516–536; sequence LEIIVLRSNRFHGPISSPEVS. 5 LRR repeats span residues 539-563, 614-637, 638-661, 662-685, and 687-709; these read FTAL…YFAN, DTYT…IGDL, KSLI…LAKL, KQLE…LREL, and FLGY…TQVG. Residues asparagine 553 and asparagine 563 are each glycosylated (N-linked (GlcNAc...) asparagine). Residue asparagine 647 is glycosylated (N-linked (GlcNAc...) asparagine). Asparagine 692 is a glycosylation site (N-linked (GlcNAc...) asparagine). A helical membrane pass occupies residues 759 to 779; that stretch reads AAAIGYGPGVLFGLAIGQAFA. Residues 780 to 792 lie on the Cytoplasmic side of the membrane; sequence RYKPVLFYKLFRL.

The protein belongs to the RLP family.

The protein localises to the cell membrane. The polypeptide is Receptor-like protein 54 (Arabidopsis thaliana (Mouse-ear cress)).